Here is a 2283-residue protein sequence, read N- to C-terminus: AT-rich interactive domain-containing protein 1A (2283 aa).

A compositionally biased stretch (low complexity) spans 1–10; sequence MAAQVAPAAA. Disordered regions lie at residues 1–333, 346–822, and 979–1006; these read MAAQ…PADM, AAAA…LPNA, and ATKMNNKADGTPKTESKSKKSSSSTTTN. At Ala2 the chain carries N-acetylalanine. Residues 22-34 show a composition bias toward basic and acidic residues; sequence ELKKAEQQQREEA. Phosphoserine occurs at positions 56 and 77. A compositionally biased stretch (gly residues) spans 77-93; the sequence is SNGGGGGGGAGSGGGPG. Low complexity-rich tracts occupy residues 128–143 and 233–266; these read SSSDGVGAPPHSAAAA and SSPRGGTPGSGAAAAAGSKPPPSSSASASSSSSS. Ser234 is subject to Phosphoserine. Over residues 274–287 the composition is skewed to gly residues; the sequence is AMGGGGPSAAGGGT. The residue at position 287 (Thr287) is a Phosphothreonine. Residues 296-300 carry the LXXLL motif; it reads LNQLL. The segment covering 296–307 has biased composition (polar residues); that stretch reads LNQLLTSPSSAR. Ser302 carries the post-translational modification Phosphoserine. The span at 311-328 shows a compositional bias: gly residues; sequence GYPGGDYGGGPQDGGAGK. Residues Ser365 and Ser384 each carry the phosphoserine modification. A compositionally biased stretch (low complexity) spans 402 to 427; that stretch reads PYSQQQGPPSGPQQGHGYPGQPYGSQ. Asymmetric dimethylarginine is present on Arg431. 2 stretches are compositionally biased toward polar residues: residues 438–451 and 459–470; these read GRAQSAMGSLSYAQ and QGPSAYGQQGQT. Composition is skewed to low complexity over residues 471-547 and 554-596; these read PYYN…QHPQ and QPQA…YSQQ. At Ser605 the chain carries Phosphoserine. Residues 611–622 show a composition bias toward low complexity; the sequence is SQASSAPSMTSS. Polar residues predominate over residues 629–638; the sequence is MNLSLQSRPS. Low complexity predominate over residues 659–675; the sequence is SPGVSTSGISSSQGEQS. Positions 676 to 686 are enriched in polar residues; the sequence is NPAQSPFSPHT. Residues Ser697, Ser699, Ser703, Ser731, Ser765, and Ser773 each carry the phosphoserine modification. Composition is skewed to polar residues over residues 731–748 and 756–794; these read SGQSDSIMHPSMNQSSIA and RNPQMPQYTSPQPGSALSPRQPSGGQMHSGVGSYQQNSM. A compositionally biased stretch (low complexity) spans 795–822; sequence GSYGPQGSQYGPQGGYPRQPNYNALPNA. The ARID domain occupies 1018-1109; the sequence is EPERKMWVDR…CLYAFECKIE (92 aa). Disordered regions lie at residues 1114–1484 and 1539–1636; these read PPPD…MMGG and RANH…PPMI. Positions 1142–1155 are enriched in low complexity; the sequence is MQGPQTPQSTSSSM. Over residues 1163–1178 the composition is skewed to pro residues; it reads PPTPASTPHSQIPPLP. Position 1185 is a phosphoserine (Ser1185). A compositionally biased stretch (polar residues) spans 1198–1220; sequence PTFQKRNSMTPNPGYQPSMNTSD. The residue at position 1236 (Ser1236) is a Phosphoserine. An Omega-N-methylarginine modification is found at Arg1277. Residues 1343 to 1368 show a composition bias toward low complexity; that stretch reads QFSTQGTPSSSPFPSQQTTMYQQQQQ. Positions 1369 to 1388 match the Nuclear localization signal motif; it reads NYKRPMDGTYGPPAKRHEGE. Low complexity predominate over residues 1395–1426; that stretch reads SAGQGQPQQQQLPAAQSQPASQPQAAQPSPQQ. 2 stretches are compositionally biased toward polar residues: residues 1427–1436 and 1469–1478; these read DVYNQYSNAY and PGSSAQQNMP. Positions 1555-1579 are enriched in pro residues; that stretch reads PYGPSAPVPPMTRPPPSNYQPPPSM. Ser1605 carries the phosphoserine modification. Lys1613 bears the N6-acetyllysine mark. The LXXLL signature appears at 1710–1714; the sequence is LPGLL. Disordered regions lie at residues 1757–1782, 1872–1904, and 1917–1941; these read PAHTEEEEEEHLDPKLEEEEEEGVGN, CPTPPRKHLTTVEGTPGTTEQEGPPPDGLPEKR, and SSTLTDEGAKSAEATKESSKFPFGI. Residues 1761-1782 are compositionally biased toward acidic residues; the sequence is EEEEEEHLDPKLEEEEEEGVGN. 2 positions are modified to phosphothreonine: Thr1874 and Thr1886. Over residues 1882–1893 the composition is skewed to low complexity; that stretch reads TVEGTPGTTEQE. Lys1903 carries the N6-acetyllysine modification. The segment covering 1923-1935 has biased composition (basic and acidic residues); sequence EGAKSAEATKESS. Residues Ser1927 and Ser1942 each carry the phosphoserine modification. 2 consecutive short sequence motifs (LXXLL) follow at residues 1965-1969 and 2083-2087; these read LCTLL and LDGLL.

As to quaternary structure, component of SWI/SNF chromatin remodeling complexes, in some of which it can be mutually exclusive with ARID1B/BAF250B. The canonical complex contains a catalytic subunit (either SMARCA4/BRG1/BAF190A or SMARCA2/BRM/BAF190B) and at least SMARCE1, ACTL6A/BAF53, SMARCC1/BAF155, SMARCC2/BAF170, and SMARCB1/SNF5/BAF47. Other subunits specific to each of the complexes may also be present permitting several possible combinations developmentally and tissue specific. Component of the BAF (SWI/SNF-A) complex, which includes at least actin (ACTB), ARID1A/BAF250A, ARID1B/BAF250B, SMARCA2/BRM, SMARCA4/BRG1/BAF190A, ACTL6A/BAF53, ACTL6B/BAF53B, SMARCE1/BAF57, SMARCC1/BAF155, SMARCC2/BAF170, SMARCB1/SNF5/INI1, and one or more SMARCD1/BAF60A, SMARCD2/BAF60B, or SMARCD3/BAF60C. In muscle cells, the BAF complex also contains DPF3. Component of neural progenitors-specific chromatin remodeling complex (npBAF complex) composed of at least, ARID1A/BAF250A or ARID1B/BAF250B, SMARCD1/BAF60A, SMARCD3/BAF60C, SMARCA2/BRM/BAF190B, SMARCA4/BRG1/BAF190A, SMARCB1/BAF47, SMARCC1/BAF155, SMARCE1/BAF57, SMARCC2/BAF170, PHF10/BAF45A, ACTL6A/BAF53A and actin. Component of neuron-specific chromatin remodeling complex (nBAF complex) composed of at least, ARID1A/BAF250A or ARID1B/BAF250B, SMARCD1/BAF60A, SMARCD3/BAF60C, SMARCA2/BRM/BAF190B, SMARCA4/BRG1/BAF190A, SMARCB1/BAF47, SMARCC1/BAF155, SMARCE1/BAF57, SMARCC2/BAF170, DPF1/BAF45B, DPF3/BAF45C, ACTL6B/BAF53B and actin. Component of a SWI/SNF-like EBAFa complex, at least composed of SMARCA4/BRG1/BAF190A, SMARCB1/BAF47/SNF5, ACTL6A/BAF53A, SMARCE1/BAF57, SMARCD1/BAF60A, SMARCC1/BAF155, SMARCC2/BAF170, BAF250A and MLLT1/ENL. Interacts through its C-terminus with SMARCA2/BRM/BAF190B and SMARCA4/BRG1/BAF190A. Interacts with SMARCC1/BAF155. Interacts with FOS (via bZIP domain and leucine-zipper region), FOSB isoform 1 and 2, FOSL1 and FOSL2. As to expression, widely expressed. Expressed at high levels in the testis.

The protein localises to the nucleus. In terms of biological role, involved in transcriptional activation and repression of select genes by chromatin remodeling (alteration of DNA-nucleosome topology). Component of SWI/SNF chromatin remodeling complexes that carry out key enzymatic activities, changing chromatin structure by altering DNA-histone contacts within a nucleosome in an ATP-dependent manner. Binds DNA non-specifically. Belongs to the neural progenitors-specific chromatin remodeling complex (npBAF complex) and the neuron-specific chromatin remodeling complex (nBAF complex). During neural development a switch from a stem/progenitor to a postmitotic chromatin remodeling mechanism occurs as neurons exit the cell cycle and become committed to their adult state. The transition from proliferating neural stem/progenitor cells to postmitotic neurons requires a switch in subunit composition of the npBAF and nBAF complexes. As neural progenitors exit mitosis and differentiate into neurons, npBAF complexes which contain ACTL6A/BAF53A and PHF10/BAF45A, are exchanged for homologous alternative ACTL6B/BAF53B and DPF1/BAF45B or DPF3/BAF45C subunits in neuron-specific complexes (nBAF). The npBAF complex is essential for the self-renewal/proliferative capacity of the multipotent neural stem cells. The nBAF complex along with CREST plays a role regulating the activity of genes essential for dendrite growth. The sequence is that of AT-rich interactive domain-containing protein 1A (Arid1a) from Mus musculus (Mouse).